Here is a 197-residue protein sequence, read N- to C-terminus: Imidazoleglycerol-phosphate dehydratase (197 aa).

The protein belongs to the imidazoleglycerol-phosphate dehydratase family.

It is found in the cytoplasm. It carries out the reaction D-erythro-1-(imidazol-4-yl)glycerol 3-phosphate = 3-(imidazol-4-yl)-2-oxopropyl phosphate + H2O. The protein operates within amino-acid biosynthesis; L-histidine biosynthesis; L-histidine from 5-phospho-alpha-D-ribose 1-diphosphate: step 6/9. The chain is Imidazoleglycerol-phosphate dehydratase from Marinomonas sp. (strain MWYL1).